Consider the following 122-residue polypeptide: uncharacterized protein (122 aa).

This is an uncharacterized protein from Methanothermobacter thermautotrophicus (Methanobacterium thermoformicicum).